The following is a 269-amino-acid chain: Myelin protein zero-like protein 1 (269 aa).

Positions 1–35 are cleaved as a signal peptide; sequence MAAPAGAGALIASPDRRRCLWSVLAAALGLLTYGV. An Ig-like V-type domain is found at 36-146; it reads SALEVYTPKE…VKNPPDIVVQ (111 aa). Residues 36-162 lie on the Extracellular side of the membrane; the sequence is SALEVYTPKE…YVVEKEILPA (127 aa). N-linked (GlcNAc...) asparagine glycosylation is found at N50, N64, and N130. A disulfide bridge links C58 with C135. Residues 163 to 183 traverse the membrane as a helical segment; that stretch reads FPVWVVVGIVTAVVLGLTLLI. Residues 184–269 lie on the Cytoplasmic side of the membrane; that stretch reads TMILAVIYRR…SVVYADIRKN (86 aa). The segment at 202–238 is disordered; the sequence is GCNTSENVSPVKQVSRKSPSDTEGLVKSLPSGSHQGP. Residues 203 to 213 are compositionally biased toward polar residues; sequence CNTSENVSPVK. Residues S206, S210, S219, and S221 each carry the phosphoserine modification. The ITIM motif 1 signature appears at 239-244; that stretch reads VIYAQL. The residue at position 241 (Y241) is a Phosphotyrosine. The residue at position 260 (S260) is a Phosphoserine. Positions 261–266 match the ITIM motif 2 motif; that stretch reads VVYADI. Phosphotyrosine is present on Y263.

This sequence belongs to the myelin P0 protein family. Interacts with phosphorylated PTPN11/SHP-2. In terms of processing, phosphorylated on tyrosine residues upon stimulation with pervanadate and concanavalin-A (ConA). Phosphorylation at Tyr-241 and Tyr-263 is required for interaction with PTPN11/SHP-2. Dephosphorylated by PTPN11/SHP-2 (in vitro). Post-translationally, N-glycosylated.

Its subcellular location is the membrane. Functionally, cell surface receptor, which is involved in signal transduction processes. Recruits PTPN11/SHP-2 to the cell membrane and is a putative substrate of PTPN11/SHP-2. Is a major receptor for concanavalin-A (ConA) and is involved in cellular signaling induced by ConA, which probably includes Src family tyrosine-protein kinases. May be involved in regulation of integrin-mediated cell motility. This is Myelin protein zero-like protein 1 (MPZL1) from Bos taurus (Bovine).